Here is a 568-residue protein sequence, read N- to C-terminus: Proline--tRNA ligase (568 aa).

Belongs to the class-II aminoacyl-tRNA synthetase family. ProS type 1 subfamily. Homodimer.

It localises to the cytoplasm. It catalyses the reaction tRNA(Pro) + L-proline + ATP = L-prolyl-tRNA(Pro) + AMP + diphosphate. In terms of biological role, catalyzes the attachment of proline to tRNA(Pro) in a two-step reaction: proline is first activated by ATP to form Pro-AMP and then transferred to the acceptor end of tRNA(Pro). As ProRS can inadvertently accommodate and process non-cognate amino acids such as alanine and cysteine, to avoid such errors it has two additional distinct editing activities against alanine. One activity is designated as 'pretransfer' editing and involves the tRNA(Pro)-independent hydrolysis of activated Ala-AMP. The other activity is designated 'posttransfer' editing and involves deacylation of mischarged Ala-tRNA(Pro). The misacylated Cys-tRNA(Pro) is not edited by ProRS. The sequence is that of Proline--tRNA ligase from Lysinibacillus sphaericus (strain C3-41).